The chain runs to 526 residues: ATP synthase subunit alpha (526 aa).

G174–T181 provides a ligand contact to ATP. Positions F505–E520 are enriched in basic and acidic residues. A disordered region spans residues F505 to G526.

Belongs to the ATPase alpha/beta chains family. F-type ATPases have 2 components, CF(1) - the catalytic core - and CF(0) - the membrane proton channel. CF(1) has five subunits: alpha(3), beta(3), gamma(1), delta(1), epsilon(1). CF(0) has three main subunits: a(1), b(2) and c(9-12). The alpha and beta chains form an alternating ring which encloses part of the gamma chain. CF(1) is attached to CF(0) by a central stalk formed by the gamma and epsilon chains, while a peripheral stalk is formed by the delta and b chains.

The protein resides in the cell membrane. It carries out the reaction ATP + H2O + 4 H(+)(in) = ADP + phosphate + 5 H(+)(out). In terms of biological role, produces ATP from ADP in the presence of a proton gradient across the membrane. The alpha chain is a regulatory subunit. The protein is ATP synthase subunit alpha of Rubrobacter xylanophilus (strain DSM 9941 / JCM 11954 / NBRC 16129 / PRD-1).